A 486-amino-acid chain; its full sequence is Acetyl-coenzyme A carboxylase carboxyl transferase subunit beta, chloroplastic (486 aa).

The CoA carboxyltransferase N-terminal domain maps to 224–486; the sequence is LWVQCENCYG…FQFHGFFPRP (263 aa). Residues Cys-228, Cys-231, Cys-247, and Cys-250 each coordinate Zn(2+). Residues 228 to 250 form a C4-type zinc finger; sequence CENCYGLNYKKFFSSKMNICEQC.

Belongs to the AccD/PCCB family. As to quaternary structure, acetyl-CoA carboxylase is a heterohexamer composed of biotin carboxyl carrier protein, biotin carboxylase and 2 subunits each of ACCase subunit alpha and ACCase plastid-coded subunit beta (accD). It depends on Zn(2+) as a cofactor.

The protein localises to the plastid. It localises to the chloroplast stroma. It carries out the reaction N(6)-carboxybiotinyl-L-lysyl-[protein] + acetyl-CoA = N(6)-biotinyl-L-lysyl-[protein] + malonyl-CoA. It functions in the pathway lipid metabolism; malonyl-CoA biosynthesis; malonyl-CoA from acetyl-CoA: step 1/1. Functionally, component of the acetyl coenzyme A carboxylase (ACC) complex. Biotin carboxylase (BC) catalyzes the carboxylation of biotin on its carrier protein (BCCP) and then the CO(2) group is transferred by the transcarboxylase to acetyl-CoA to form malonyl-CoA. This chain is Acetyl-coenzyme A carboxylase carboxyl transferase subunit beta, chloroplastic, found in Nymphaea alba (White water-lily).